The sequence spans 146 residues: Large ribosomal subunit protein uL15 (146 aa).

The interval 1 to 65 (MSDIQLNSLK…GQMPLQRRLP (65 aa)) is disordered. The span at 24–34 (RGIGSGLGKTA) shows a compositional bias: gly residues.

This sequence belongs to the universal ribosomal protein uL15 family. Part of the 50S ribosomal subunit.

Binds to the 23S rRNA. The chain is Large ribosomal subunit protein uL15 from Bordetella avium (strain 197N).